A 2009-amino-acid polypeptide reads, in one-letter code: Rootletin (2009 aa).

2 coiled-coil regions span residues 74–265 (EMAS…VTSD) and 346–438 (ASLH…LRLQ). Disordered stretches follow at residues 462-519 (ALSD…CSDS), 575-594 (RDQT…EAQR), 636-665 (ELKR…LERS), 1180-1225 (EAQR…ELRS), and 1448-1501 (GRVS…EAVR). The span at 463-484 (LSDTESGVQLSSSERTADTSDG) shows a compositional bias: polar residues. 2 coiled-coil regions span residues 550 to 1058 (LGSV…LLAE) and 1091 to 1439 (LEME…GLRS). Residues 577 to 586 (QTAASAQAQE) show a composition bias toward low complexity. Positions 656-665 (ARARRELERS) are enriched in basic and acidic residues. Residues Ser1453, Ser1463, and Ser1469 each carry the phosphoserine modification. Tyr1475 carries the post-translational modification Phosphotyrosine. Phosphoserine occurs at positions 1476, 1479, 1483, 1489, and 1568. Residues 1479-1494 (SQPPSPGLIASPAPPD) show a composition bias toward pro residues. 2 coiled-coil regions span residues 1498-1697 (EAVR…GTLQ) and 1744-1998 (HLQK…RSSA). The tract at residues 1957-2009 (QVQTERTLEARERAHRQRVSGLEEQVSTLKAQLHQELRRSSASVSLPPGTPEK) is disordered.

The protein belongs to the rootletin family. As to quaternary structure, homomer. Interacts with KLC3, NEK2 and the N-terminus of CEP250. Interacts with CEP44. Post-translationally, phosphorylated by NEK2 which may regulate its association with centrosomes. As to expression, highest expression detected in photoreceptor cells of retina. Expressed at lower levels in brain, trachea and kidney. Detected in all major ciliated epithelia. During embryonic development, enriched along the apical domains of neuroepithelium in brain ventricular zone, in primordia of retinal pigment epithelia and in neural retina.

The protein resides in the cytoplasm. The protein localises to the cytoskeleton. It localises to the microtubule organizing center. It is found in the centrosome. Its subcellular location is the centriole. The protein resides in the cilium basal body. In terms of biological role, major structural component of the ciliary rootlet, a cytoskeletal-like structure in ciliated cells which originates from the basal body at the proximal end of a cilium and extends proximally toward the cell nucleus. Furthermore, is required for the correct positioning of the cilium basal body relative to the cell nucleus, to allow for ciliogenesis. Contributes to centrosome cohesion before mitosis. The protein is Rootletin of Mus musculus (Mouse).